The sequence spans 185 residues: Ribosome-recycling factor (185 aa).

It belongs to the RRF family.

Its subcellular location is the cytoplasm. Functionally, responsible for the release of ribosomes from messenger RNA at the termination of protein biosynthesis. May increase the efficiency of translation by recycling ribosomes from one round of translation to another. The sequence is that of Ribosome-recycling factor from Xanthomonas campestris pv. campestris (strain 8004).